We begin with the raw amino-acid sequence, 212 residues long: Peptide methionine sulfoxide reductase MsrA (212 aa).

The active site involves Cys52.

It belongs to the MsrA Met sulfoxide reductase family.

It carries out the reaction L-methionyl-[protein] + [thioredoxin]-disulfide + H2O = L-methionyl-(S)-S-oxide-[protein] + [thioredoxin]-dithiol. It catalyses the reaction [thioredoxin]-disulfide + L-methionine + H2O = L-methionine (S)-S-oxide + [thioredoxin]-dithiol. Its function is as follows. Has an important function as a repair enzyme for proteins that have been inactivated by oxidation. Catalyzes the reversible oxidation-reduction of methionine sulfoxide in proteins to methionine. The sequence is that of Peptide methionine sulfoxide reductase MsrA from Cronobacter sakazakii (strain ATCC BAA-894) (Enterobacter sakazakii).